Here is a 133-residue protein sequence, read N- to C-terminus: Large ribosomal subunit protein bL17 (133 aa).

This sequence belongs to the bacterial ribosomal protein bL17 family. Part of the 50S ribosomal subunit. Contacts protein L32.

This is Large ribosomal subunit protein bL17 from Nitratidesulfovibrio vulgaris (strain DSM 19637 / Miyazaki F) (Desulfovibrio vulgaris).